The sequence spans 120 residues: MITKPNKNAGRKKRHAHVRRTLSGTPQRPRLNVFRSSKHIYAQLIDDVNGVTLAQASTLDKELGLENGGNKEAARKVGELVGKRAVDAGFESVVFDRGGYLYHGRIAELADGAREAGLKF.

A disordered region spans residues 1–29 (MITKPNKNAGRKKRHAHVRRTLSGTPQRP). The segment covering 9 to 20 (AGRKKRHAHVRR) has biased composition (basic residues).

This sequence belongs to the universal ribosomal protein uL18 family. Part of the 50S ribosomal subunit; part of the 5S rRNA/L5/L18/L25 subcomplex. Contacts the 5S and 23S rRNAs.

In terms of biological role, this is one of the proteins that bind and probably mediate the attachment of the 5S RNA into the large ribosomal subunit, where it forms part of the central protuberance. The protein is Large ribosomal subunit protein uL18 of Shouchella clausii (strain KSM-K16) (Alkalihalobacillus clausii).